The chain runs to 355 residues: Protein RecA (355 aa).

69–76 (GPESSGKT) lines the ATP pocket. The segment at 329–355 (AYGLPDREETKREETAQIPDTEKTKDV) is disordered.

Belongs to the RecA family.

The protein resides in the cytoplasm. Its function is as follows. Can catalyze the hydrolysis of ATP in the presence of single-stranded DNA, the ATP-dependent uptake of single-stranded DNA by duplex DNA, and the ATP-dependent hybridization of homologous single-stranded DNAs. It interacts with LexA causing its activation and leading to its autocatalytic cleavage. The sequence is that of Protein RecA from Desulfotalea psychrophila (strain LSv54 / DSM 12343).